Consider the following 543-residue polypeptide: Small conductance calcium-activated potassium channel protein 1 (543 aa).

The disordered stretch occupies residues 1 to 92 (MNSHSYNGSV…SGKPSNVGHR (92 aa)). Positions 65 to 76 (DQDDDEDDEEDE) are enriched in acidic residues. The helical transmembrane segment at 111-131 (LIFGMFGIVVMVTETELSWGV) threads the bilayer. The chain crosses the membrane as a helical span at residues 140 to 160 (FALKCLISLSTAILLGLVVLY). A helical transmembrane segment spans residues 179–199 (IAMTCERVFLISLELAVCAIH). A helical membrane pass occupies residues 228–248 (VLLSIPMFLRLYLLGRVMLLH). A helical membrane pass occupies residues 277-297 (LMTICPGTVLLVFSISSWIIA). Residues 317–337 (FLGAMWLISITFLSIGYGDMV) constitute an intramembrane region (pore-forming). The chain crosses the membrane as a helical span at residues 346–366 (VCLLTGIMGAGCTALVVAVVA). The interval 384-463 (DTQLTKRVKN…LTDLAKTQTV (80 aa)) is calmodulin-binding. Residues 505 to 543 (QAIRPPPPPLPPRPGPGPQDQAARSSPCRWTPVAPSDCG) form a disordered region. Over residues 508–521 (RPPPPPLPPRPGPG) the composition is skewed to pro residues.

Belongs to the potassium channel KCNN family. KCa2.1/KCNN1 subfamily. In terms of assembly, homodimer. Heteromultimer with KCNN2 and KCNN3. The complex is composed of 4 channel subunits each of which binds to a calmodulin subunit which regulates the channel activity through calcium-binding. Interacts with calmodulin.

The protein resides in the membrane. It localises to the cytoplasm. It is found in the myofibril. Its subcellular location is the sarcomere. The protein localises to the z line. It catalyses the reaction K(+)(in) = K(+)(out). Its activity is regulated as follows. Inhibited by bee venom neurotoxin apamin. Inhibited by d-tubocurarine and tetraethylammonium (TEA). Small conductance calcium-activated potassium channel that mediates the voltage-independent transmembrane transfer of potassium across the cell membrane through a constitutive interaction with calmodulin which binds the intracellular calcium allowing its opening. The current is characterized by a voltage-independent activation, an intracellular calcium concentration increase-dependent activation and a single-channel conductance of about 3 picosiemens. Also presents an inwardly rectifying current, thus reducing its already small outward conductance of potassium ions, which is particularly the case when the membrane potential displays positive values, above + 20 mV. Activation is followed by membrane hyperpolarization. Thought to regulate neuronal excitability by contributing to the slow component of synaptic afterhyperpolarization. In Homo sapiens (Human), this protein is Small conductance calcium-activated potassium channel protein 1.